Reading from the N-terminus, the 568-residue chain is 2-succinyl-5-enolpyruvyl-6-hydroxy-3-cyclohexene-1-carboxylate synthase (568 aa).

The protein belongs to the TPP enzyme family. MenD subfamily. In terms of assembly, homodimer. Requires Mg(2+) as cofactor. It depends on Mn(2+) as a cofactor. The cofactor is thiamine diphosphate.

It catalyses the reaction isochorismate + 2-oxoglutarate + H(+) = 5-enolpyruvoyl-6-hydroxy-2-succinyl-cyclohex-3-ene-1-carboxylate + CO2. It participates in quinol/quinone metabolism; 1,4-dihydroxy-2-naphthoate biosynthesis; 1,4-dihydroxy-2-naphthoate from chorismate: step 2/7. Its pathway is quinol/quinone metabolism; menaquinone biosynthesis. Functionally, catalyzes the thiamine diphosphate-dependent decarboxylation of 2-oxoglutarate and the subsequent addition of the resulting succinic semialdehyde-thiamine pyrophosphate anion to isochorismate to yield 2-succinyl-5-enolpyruvyl-6-hydroxy-3-cyclohexene-1-carboxylate (SEPHCHC). This Pasteurella multocida (strain Pm70) protein is 2-succinyl-5-enolpyruvyl-6-hydroxy-3-cyclohexene-1-carboxylate synthase.